The chain runs to 286 residues: MAENTMWHETLHDQFGQYFAVDNVLYHEKTDHQDLIIFENAAFGRVMALDGVVQTTERDEFIYHEMMTHVPLLAHGHAKHVLIIGGGDGAMLREVTRHKNVETITMVEIDAGVVSFCRQYLPNHNAGSYDDPRFTLVIDDGVNFVNQTHQTFDVIISDCTDPIGPGESLFTSAFYEGCKRCLNPGGIFVAQNGVCFLQQDEALDSHRKLSHYFSDVGFYQAAIPTYYGGIMTFAWATDNDALRHLSSEIIQARFHAAGLKCRYYNPAIHVAAFALPQYLHDALSAQ.

One can recognise a PABS domain in the interval 5–238 (TMWHETLHDQ…GIMTFAWATD (234 aa)). Gln33 is a binding site for S-methyl-5'-thioadenosine. 2 residues coordinate spermidine: His64 and Asp88. Residues Glu108 and 140–141 (DG) contribute to the S-methyl-5'-thioadenosine site. Residue Asp158 is the Proton acceptor of the active site. Residue 158-161 (DCTD) participates in spermidine binding. Pro165 contacts S-methyl-5'-thioadenosine.

It belongs to the spermidine/spermine synthase family. In terms of assembly, homodimer or homotetramer.

The protein localises to the cytoplasm. It carries out the reaction S-adenosyl 3-(methylsulfanyl)propylamine + putrescine = S-methyl-5'-thioadenosine + spermidine + H(+). The protein operates within amine and polyamine biosynthesis; spermidine biosynthesis; spermidine from putrescine: step 1/1. Its function is as follows. Catalyzes the irreversible transfer of a propylamine group from the amino donor S-adenosylmethioninamine (decarboxy-AdoMet) to putrescine (1,4-diaminobutane) to yield spermidine. This chain is Polyamine aminopropyltransferase, found in Salmonella schwarzengrund (strain CVM19633).